The chain runs to 450 residues: Putative cysteine--tRNA ligase 2 (450 aa).

Positions 29–39 (ITPYKSTHLGH) match the 'HIGH' region motif. A 'KMSKS' region motif is present at residues 270–274 (KMSKS). Residue lysine 273 coordinates ATP. A disordered region spans residues 372–392 (PIHPKHSPQMRDYSEHGSAGQ).

This sequence belongs to the class-I aminoacyl-tRNA synthetase family. As to quaternary structure, monomer.

Its subcellular location is the cytoplasm. The catalysed reaction is tRNA(Cys) + L-cysteine + ATP = L-cysteinyl-tRNA(Cys) + AMP + diphosphate. The sequence is that of Putative cysteine--tRNA ligase 2 (cysS2) from Tropheryma whipplei (strain TW08/27) (Whipple's bacillus).